The primary structure comprises 529 residues: Bifunctional purine biosynthesis protein PurH (529 aa).

An MGS-like domain is found at 1–148 (MQQRRPVRRA…KNHKDVAIVV (148 aa)). An N6-acetyllysine modification is found at lysine 287.

Belongs to the PurH family.

The catalysed reaction is (6R)-10-formyltetrahydrofolate + 5-amino-1-(5-phospho-beta-D-ribosyl)imidazole-4-carboxamide = 5-formamido-1-(5-phospho-D-ribosyl)imidazole-4-carboxamide + (6S)-5,6,7,8-tetrahydrofolate. It catalyses the reaction IMP + H2O = 5-formamido-1-(5-phospho-D-ribosyl)imidazole-4-carboxamide. It participates in purine metabolism; IMP biosynthesis via de novo pathway; 5-formamido-1-(5-phospho-D-ribosyl)imidazole-4-carboxamide from 5-amino-1-(5-phospho-D-ribosyl)imidazole-4-carboxamide (10-formyl THF route): step 1/1. It functions in the pathway purine metabolism; IMP biosynthesis via de novo pathway; IMP from 5-formamido-1-(5-phospho-D-ribosyl)imidazole-4-carboxamide: step 1/1. This is Bifunctional purine biosynthesis protein PurH from Shigella dysenteriae serotype 1 (strain Sd197).